Reading from the N-terminus, the 467-residue chain is Asparagine--tRNA ligase (467 aa).

Belongs to the class-II aminoacyl-tRNA synthetase family. Homodimer.

The protein resides in the cytoplasm. The catalysed reaction is tRNA(Asn) + L-asparagine + ATP = L-asparaginyl-tRNA(Asn) + AMP + diphosphate + H(+). The polypeptide is Asparagine--tRNA ligase (Mannheimia succiniciproducens (strain KCTC 0769BP / MBEL55E)).